Here is a 296-residue protein sequence, read N- to C-terminus: Cyclin-dependent kinase 1 (296 aa).

A Protein kinase domain is found at 5–288; the sequence is FQKLEKIGEG…AKNGLSHKYF (284 aa). Residues 11-19 and Lys-34 each bind ATP; that span reads IGEGTYGVV. Asp-130 functions as the Proton acceptor in the catalytic mechanism.

This sequence belongs to the protein kinase superfamily. CMGC Ser/Thr protein kinase family. CDC2/CDKX subfamily.

It localises to the nucleus. The enzyme catalyses L-seryl-[protein] + ATP = O-phospho-L-seryl-[protein] + ADP + H(+). It carries out the reaction L-threonyl-[protein] + ATP = O-phospho-L-threonyl-[protein] + ADP + H(+). Cyclin-dependent kinase that acts as a master regulator of the mitotic and meiotic cell cycles. The sequence is that of Cyclin-dependent kinase 1 from Encephalitozoon cuniculi (strain GB-M1) (Microsporidian parasite).